Here is a 221-residue protein sequence, read N- to C-terminus: SIN3-HDAC complex-associated factor (221 aa).

Basic and acidic residues predominate over residues Q112 to D121. Disordered stretches follow at residues Q112–G152 and A201–W221. Residues S124 to P135 are compositionally biased toward low complexity. Residues C136 to G152 show a composition bias toward polar residues.

Belongs to the SINHCAF family. In terms of assembly, interacts with the Sin3/HDAC corepressor complex at least composed of BRMS1, BRMS1L, ING2, SAP30, SAP30L and HDAC1. Found in a complex composed of at least SINHCAF, SIN3A, HDAC1, SAP30, RBBP4, OGT and TET1. Interacts with SIN3A and OGT.

It is found in the nucleus. In terms of biological role, subunit of the Sin3 deacetylase complex (Sin3/HDAC), this subunit is important for the repression of genes encoding components of the TGF-beta signaling pathway. Core component of a SIN3A complex (composed of at least SINHCAF, SIN3A, HDAC1, SAP30, RBBP4, OGT and TET1) present in embryonic stem (ES) cells. Promotes the stability of SIN3A and its presence on chromatin and is essential for maintaining the potential of ES cells to proliferate rapidly, while ensuring a short G1-phase of the cell cycle, thereby preventing premature lineage priming. The polypeptide is SIN3-HDAC complex-associated factor (Homo sapiens (Human)).